The sequence spans 699 residues: Glycine--tRNA ligase beta subunit (699 aa).

This sequence belongs to the class-II aminoacyl-tRNA synthetase family. In terms of assembly, tetramer of two alpha and two beta subunits.

The protein resides in the cytoplasm. It carries out the reaction tRNA(Gly) + glycine + ATP = glycyl-tRNA(Gly) + AMP + diphosphate. This chain is Glycine--tRNA ligase beta subunit, found in Bradyrhizobium diazoefficiens (strain JCM 10833 / BCRC 13528 / IAM 13628 / NBRC 14792 / USDA 110).